Consider the following 633-residue polypeptide: Probable potassium transport system protein Kup 2 (633 aa).

Transmembrane regions (helical) follow at residues 18–38 (FLAM…TSPL), 61–81 (LISL…VLFL), 109–129 (LMFM…MITP), 145–165 (PAFH…LFAV), 173–193 (VSIF…AAGV), 211–231 (AVTF…AVFL), 255–275 (WFAV…ALVL), 287–307 (LMFP…ATII), 345–365 (IYLP…MFMF), 371–391 (LATA…VLAF), 405–425 (ATAV…ANLF), and 427–447 (IHDG…TMWT).

This sequence belongs to the HAK/KUP transporter (TC 2.A.72) family.

The protein resides in the cell inner membrane. The enzyme catalyses K(+)(in) + H(+)(in) = K(+)(out) + H(+)(out). In terms of biological role, transport of potassium into the cell. Likely operates as a K(+):H(+) symporter. This chain is Probable potassium transport system protein Kup 2, found in Sinorhizobium medicae (strain WSM419) (Ensifer medicae).